Consider the following 293-residue polypeptide: Large ribosomal subunit protein uL2c (293 aa).

Positions 224–245 (VMNPVDHPHGGGEGKSPIGRAR) are disordered.

Belongs to the universal ribosomal protein uL2 family. As to quaternary structure, part of the 50S ribosomal subunit.

It is found in the plastid. It localises to the chloroplast. This Pyropia yezoensis (Susabi-nori) protein is Large ribosomal subunit protein uL2c (rpl2).